A 425-amino-acid chain; its full sequence is Serine--tRNA ligase (425 aa).

230 to 232 (TAE) is an L-serine binding site. 261–263 (RAE) is a binding site for ATP. Glu-284 contacts L-serine. Position 348-351 (348-351 (EISS)) interacts with ATP. Ser-384 provides a ligand contact to L-serine.

It belongs to the class-II aminoacyl-tRNA synthetase family. Type-1 seryl-tRNA synthetase subfamily. In terms of assembly, homodimer. The tRNA molecule binds across the dimer.

It is found in the cytoplasm. It carries out the reaction tRNA(Ser) + L-serine + ATP = L-seryl-tRNA(Ser) + AMP + diphosphate + H(+). The catalysed reaction is tRNA(Sec) + L-serine + ATP = L-seryl-tRNA(Sec) + AMP + diphosphate + H(+). Its pathway is aminoacyl-tRNA biosynthesis; selenocysteinyl-tRNA(Sec) biosynthesis; L-seryl-tRNA(Sec) from L-serine and tRNA(Sec): step 1/1. Catalyzes the attachment of serine to tRNA(Ser). Is also able to aminoacylate tRNA(Sec) with serine, to form the misacylated tRNA L-seryl-tRNA(Sec), which will be further converted into selenocysteinyl-tRNA(Sec). The chain is Serine--tRNA ligase from Zymomonas mobilis subsp. mobilis (strain ATCC 31821 / ZM4 / CP4).